We begin with the raw amino-acid sequence, 437 residues long: Protein arginine methyltransferase NDUFAF7 homolog, mitochondrial (437 aa).

Positions Arg21–His49 are disordered.

The protein belongs to the NDUFAF7 family.

The protein resides in the mitochondrion. The catalysed reaction is L-arginyl-[protein] + 2 S-adenosyl-L-methionine = N(omega),N(omega)'-dimethyl-L-arginyl-[protein] + 2 S-adenosyl-L-homocysteine + 2 H(+). In terms of biological role, arginine methyltransferase involved in the assembly or stability of mitochondrial NADH:ubiquinone oxidoreductase complex (complex I). The chain is Protein arginine methyltransferase NDUFAF7 homolog, mitochondrial from Drosophila melanogaster (Fruit fly).